Reading from the N-terminus, the 351-residue chain is Protein Wnt-8b (351 aa).

Residues 1 to 22 (MFLSKPSVYICLFTCVLQLSHS) form the signal peptide. Cysteine 54 and cysteine 65 are joined by a disulfide. Asparagine 103 carries N-linked (GlcNAc...) asparagine glycosylation. 10 cysteine pairs are disulfide-bonded: cysteine 104-cysteine 112, cysteine 114-cysteine 132, cysteine 180-cysteine 194, cysteine 182-cysteine 189, cysteine 256-cysteine 294, cysteine 272-cysteine 287, cysteine 291-cysteine 333, cysteine 309-cysteine 324, cysteine 311-cysteine 321, and cysteine 316-cysteine 317. Serine 186 carries the O-palmitoleoyl serine lipid modification. Asparagine 259 is a glycosylation site (N-linked (GlcNAc...) asparagine).

It belongs to the Wnt family. Palmitoleoylation is required for efficient binding to frizzled receptors. Depalmitoleoylation leads to Wnt signaling pathway inhibition. Post-translationally, proteolytic processing by TIKI1 and TIKI2 promotes oxidation and formation of large disulfide-bond oligomers, leading to inactivation of WNT8B. Expression is restricted to the brain, and more specifically to the forebrain.

Its subcellular location is the secreted. It localises to the extracellular space. It is found in the extracellular matrix. Its function is as follows. Ligand for members of the frizzled family of seven transmembrane receptors. May play an important role in the development and differentiation of certain forebrain structures, notably the hippocampus. In Homo sapiens (Human), this protein is Protein Wnt-8b (WNT8B).